Here is a 354-residue protein sequence, read N- to C-terminus: MIRVVVVDDSMSMRTLLERIINGCDGMTCVGAAEDASAAREMIRALDPDVVTLDVEMPGMDGLEFLRRMMLLKPTPTIMVSGRTTSGSDAALRALELGAVDVIAKPLLTRPADLADYARDIAELIRGAAAARVKGGALAAASSAGRERACAHRPRGAKKAGIAATRLSRVIAIGASTGGTEALRTVLQDMSGTPPPILICQHMPEGFTASFAARLDAICGIRVKEAEQGEPLHYGCAYVAPGHSHLSLAATGRLYVCRLEASPPVNRHRPSVDVLFDSVARLAGKRALGAILTGMGKDGAAGLLRMRASGARTFAQDEPSCVVFGMPKEAIAMGAVDEILPLARMGARLSEALQ.

The Response regulatory domain occupies 3-120 (RVVVVDDSMS…PADLADYARD (118 aa)). D54 carries the 4-aspartylphosphate modification. A CheB-type methylesterase domain is found at 164–354 (ATRLSRVIAI…MGARLSEALQ (191 aa)). Catalysis depends on residues S176, H202, and D298.

It belongs to the CheB family. Post-translationally, phosphorylated by CheA. Phosphorylation of the N-terminal regulatory domain activates the methylesterase activity.

It is found in the cytoplasm. It catalyses the reaction [protein]-L-glutamate 5-O-methyl ester + H2O = L-glutamyl-[protein] + methanol + H(+). It carries out the reaction L-glutaminyl-[protein] + H2O = L-glutamyl-[protein] + NH4(+). Functionally, involved in chemotaxis. Part of a chemotaxis signal transduction system that modulates chemotaxis in response to various stimuli. Catalyzes the demethylation of specific methylglutamate residues introduced into the chemoreceptors (methyl-accepting chemotaxis proteins or MCP) by CheR. Also mediates the irreversible deamidation of specific glutamine residues to glutamic acid. The chain is Protein-glutamate methylesterase/protein-glutamine glutaminase 2 from Burkholderia thailandensis (strain ATCC 700388 / DSM 13276 / CCUG 48851 / CIP 106301 / E264).